The sequence spans 842 residues: Valine--tRNA ligase (842 aa).

A 'HIGH' region motif is present at residues 86 to 96; that stretch reads PFTSGELHMGH. The 'KMSKS' region motif lies at 572 to 576; it reads RMSKS. Lys575 is a binding site for ATP.

This sequence belongs to the class-I aminoacyl-tRNA synthetase family. ValS type 2 subfamily.

The protein localises to the cytoplasm. It carries out the reaction tRNA(Val) + L-valine + ATP = L-valyl-tRNA(Val) + AMP + diphosphate. Its function is as follows. Catalyzes the attachment of valine to tRNA(Val). As ValRS can inadvertently accommodate and process structurally similar amino acids such as threonine, to avoid such errors, it has a 'posttransfer' editing activity that hydrolyzes mischarged Thr-tRNA(Val) in a tRNA-dependent manner. This Saccharolobus solfataricus (strain ATCC 35092 / DSM 1617 / JCM 11322 / P2) (Sulfolobus solfataricus) protein is Valine--tRNA ligase.